We begin with the raw amino-acid sequence, 209 residues long: Transcription antitermination protein NusB (209 aa).

This sequence belongs to the NusB family.

In terms of biological role, involved in transcription antitermination. Required for transcription of ribosomal RNA (rRNA) genes. Binds specifically to the boxA antiterminator sequence of the ribosomal RNA (rrn) operons. The polypeptide is Transcription antitermination protein NusB (Cyanothece sp. (strain PCC 7425 / ATCC 29141)).